A 208-amino-acid chain; its full sequence is Small ribosomal subunit protein uS4 (208 aa).

One can recognise an S4 RNA-binding domain in the interval 98–160 (RRIDNTVYRL…SRQLQMINEA (63 aa)).

It belongs to the universal ribosomal protein uS4 family. Part of the 30S ribosomal subunit. Contacts protein S5. The interaction surface between S4 and S5 is involved in control of translational fidelity.

Its function is as follows. One of the primary rRNA binding proteins, it binds directly to 16S rRNA where it nucleates assembly of the body of the 30S subunit. With S5 and S12 plays an important role in translational accuracy. This Syntrophobacter fumaroxidans (strain DSM 10017 / MPOB) protein is Small ribosomal subunit protein uS4.